Reading from the N-terminus, the 325-residue chain is Ribosomal RNA small subunit methyltransferase H (325 aa).

The segment at 1–28 is disordered; it reads MTASQPLDQADQDSESSSAGSSAAETEH. Residues 15–24 are compositionally biased toward low complexity; the sequence is ESSSAGSSAA. Residues 56–58, Asp82, Tyr110, Asp131, and Gln138 each bind S-adenosyl-L-methionine; that span reads GGH. The disordered stretch occupies residues 303–325; that stretch reads TDEEVQANPRSRSAKLRVAKRVE. Basic residues predominate over residues 314 to 325; the sequence is RSAKLRVAKRVE.

It belongs to the methyltransferase superfamily. RsmH family.

It is found in the cytoplasm. It catalyses the reaction cytidine(1402) in 16S rRNA + S-adenosyl-L-methionine = N(4)-methylcytidine(1402) in 16S rRNA + S-adenosyl-L-homocysteine + H(+). Specifically methylates the N4 position of cytidine in position 1402 (C1402) of 16S rRNA. The chain is Ribosomal RNA small subunit methyltransferase H from Rhodopirellula baltica (strain DSM 10527 / NCIMB 13988 / SH1).